The chain runs to 316 residues: Apolipoprotein E (316 aa).

A signal peptide spans Met1–Ala18. 8 consecutive repeat copies span residues Ala79 to Gly100, Pro101 to Gly122, Ser123 to Gly144, Gln145 to Leu166, Arg167 to Glu188, Arg189 to Ala210, Thr211 to His232, and Gly233 to Glu254. An 8 X 22 AA approximate tandem repeats region spans residues Ala79–Glu254. Methionine sulfoxide is present on Met142. Ser146 bears the Phosphoserine; by FAM20C mark. The segment at His157 to Arg167 is LDL and other lipoprotein receptors binding. Leu161–Arg164 is a heparin binding site. Residues Ala209 to Met289 form a lipid-binding and lipoprotein association region. Residue Thr211 is glycosylated (O-linked (GalNAc...) threonine). Arg228–Leu235 serves as a coordination point for heparin. The segment at Asn265–His316 is homooligomerization. Residues Arg277–Met289 are specificity for association with VLDL.

The protein belongs to the apolipoprotein A1/A4/E family. Homotetramer. May interact with ABCA1; functionally associated with ABCA1 in the biogenesis of HDLs. May interact with APP/A4 amyloid-beta peptide; the interaction is extremely stable in vitro but its physiological significance is unclear. May interact with MAPT. May interact with MAP2. In the cerebrospinal fluid, interacts with secreted SORL1. Interacts with PMEL; this allows the loading of PMEL luminal fragment on ILVs to induce fibril nucleation. APOE exists as multiple glycosylated and sialylated glycoforms within cells and in plasma. The extent of glycosylation and sialylation are tissue and context specific. Post-translationally, glycated in plasma VLDL. In terms of processing, phosphorylated by FAM20C in the extracellular medium.

The protein resides in the secreted. It localises to the extracellular space. Its subcellular location is the extracellular matrix. It is found in the extracellular vesicle. The protein localises to the endosome. The protein resides in the multivesicular body. Its function is as follows. APOE is an apolipoprotein, a protein associating with lipid particles, that mainly functions in lipoprotein-mediated lipid transport between organs via the plasma and interstitial fluids. APOE is a core component of plasma lipoproteins and is involved in their production, conversion and clearance. Apolipoproteins are amphipathic molecules that interact both with lipids of the lipoprotein particle core and the aqueous environment of the plasma. As such, APOE associates with chylomicrons, chylomicron remnants, very low density lipoproteins (VLDL) and intermediate density lipoproteins (IDL) but shows a preferential binding to high-density lipoproteins (HDL). It also binds a wide range of cellular receptors including the LDL receptor/LDLR and the very low-density lipoprotein receptor/VLDLR that mediate the cellular uptake of the APOE-containing lipoprotein particles. Finally, APOE also has a heparin-binding activity and binds heparan-sulfate proteoglycans on the surface of cells, a property that supports the capture and the receptor-mediated uptake of APOE-containing lipoproteins by cells. This chain is Apolipoprotein E (APOE), found in Bos mutus grunniens (Wild yak).